Consider the following 229-residue polypeptide: Biosynthetic peptidoglycan transglycosylase (229 aa).

A helical membrane pass occupies residues 14-34; sequence FITWRFLLVVVLLLLVLLLVL.

Belongs to the glycosyltransferase 51 family.

It localises to the cell inner membrane. It carries out the reaction [GlcNAc-(1-&gt;4)-Mur2Ac(oyl-L-Ala-gamma-D-Glu-L-Lys-D-Ala-D-Ala)](n)-di-trans,octa-cis-undecaprenyl diphosphate + beta-D-GlcNAc-(1-&gt;4)-Mur2Ac(oyl-L-Ala-gamma-D-Glu-L-Lys-D-Ala-D-Ala)-di-trans,octa-cis-undecaprenyl diphosphate = [GlcNAc-(1-&gt;4)-Mur2Ac(oyl-L-Ala-gamma-D-Glu-L-Lys-D-Ala-D-Ala)](n+1)-di-trans,octa-cis-undecaprenyl diphosphate + di-trans,octa-cis-undecaprenyl diphosphate + H(+). It participates in cell wall biogenesis; peptidoglycan biosynthesis. In terms of biological role, peptidoglycan polymerase that catalyzes glycan chain elongation from lipid-linked precursors. This chain is Biosynthetic peptidoglycan transglycosylase, found in Shewanella denitrificans (strain OS217 / ATCC BAA-1090 / DSM 15013).